Here is a 111-residue protein sequence, read N- to C-terminus: Glucosamine 6-phosphate N-acetyltransferase (111 aa).

An N-acetyltransferase domain is found at 1–111; that stretch reads MKKDFHSTYY…MKKYASHSII (111 aa). Substrate contacts are provided by residues 33–36 and 45–47; these read KFLR and EEV. Acetyl-CoA contacts are provided by residues 47–49 and 55–60; these read VIV and RKAIGK. Substrate-binding positions include 76–77 and aspartate 81; that span reads YK. Position 90 to 92 (90 to 92) interacts with acetyl-CoA; that stretch reads YEK.

The protein belongs to the acetyltransferase family. GNA1 subfamily.

It catalyses the reaction D-glucosamine 6-phosphate + acetyl-CoA = N-acetyl-D-glucosamine 6-phosphate + CoA + H(+). It participates in nucleotide-sugar biosynthesis; UDP-N-acetyl-alpha-D-glucosamine biosynthesis; N-acetyl-alpha-D-glucosamine 1-phosphate from alpha-D-glucosamine 6-phosphate (route I): step 1/2. The polypeptide is Glucosamine 6-phosphate N-acetyltransferase (gna1) (Schizosaccharomyces pombe (strain 972 / ATCC 24843) (Fission yeast)).